The chain runs to 92 residues: MTRSLKKNPFVANHLLRKINKLNTKAEKDIIITWSRASTIIPTMIGHTIAIHNGKEHLPIYITDRMVGHKLGEFSPTLNFRGHAKNDNRSRR.

It belongs to the universal ribosomal protein uS19 family.

The protein resides in the plastid. It localises to the chloroplast. In terms of biological role, protein S19 forms a complex with S13 that binds strongly to the 16S ribosomal RNA. The chain is Small ribosomal subunit protein uS19c (rps19) from Glycine max (Soybean).